A 474-amino-acid polypeptide reads, in one-letter code: Vacuolar basic amino acid transporter 2 (474 aa).

The Cytoplasmic segment spans residues 1–33; the sequence is MSISNWITTAYLITSTSFQPLYGSFSDALGRRN. Residues 34 to 54 traverse the membrane as a helical segment; it reads CLFFANGAFTIGCLACGFSKN. The Vacuolar portion of the chain corresponds to 55–62; sequence IYMLSFMR. Residues 63–85 traverse the membrane as a helical segment; the sequence is ALTGIGGGGLITLSTIVNSDVIP. Over 86–97 the chain is Cytoplasmic; sequence SSKRGIFQAFQN. Residues 98–118 form a helical membrane-spanning segment; it reads LLLGFGAICGASFGGTIASSI. Topologically, residues 119–121 are vacuolar; that stretch reads GWR. Residues 122 to 142 form a helical membrane-spanning segment; sequence WCFLIQVPISVISSILMNYYV. At 143–167 the chain is on the cytoplasmic side; the sequence is PNQKEYNRQNSSIFQNPGKILRDID. The chain crosses the membrane as a helical span at residues 168–188; it reads VMGSILIITGLTLQLLYLSLG. The Vacuolar portion of the chain corresponds to 189 to 196; that stretch reads CSTSKLSW. A helical transmembrane segment spans residues 197-217; it reads TSPSVLLLLVGSVIILLLFIL. Residues 218–238 lie on the Cytoplasmic side of the membrane; it reads HERKTSARAIIPMELVNSSYS. Residues 239–259 traverse the membrane as a helical segment; the sequence is VVVLSISILVGFASYAYLFTL. Over 260 to 273 the chain is Vacuolar; sequence PLFFQIVLGDSTAK. A helical transmembrane segment spans residues 274 to 294; the sequence is AGLRLTIPSLFTPVGSLITGF. The Cytoplasmic portion of the chain corresponds to 295–303; the sequence is SMSKYNCLR. Residues 304 to 324 traverse the membrane as a helical segment; the sequence is LLLYIGISLMFLGNFLFLFIE. At 325-331 the chain is on the vacuolar side; that stretch reads KTSPNWL. The helical transmembrane segment at 332 to 352 threads the bilayer; it reads IGLFLIPANLGQGITFPTTLF. Residues 353-375 lie on the Cytoplasmic side of the membrane; sequence TFIFMFSKSDQATATSTLYLFRS. A helical transmembrane segment spans residues 376–396; sequence IGSVWGVAISAGVIQLSFAGL. The Vacuolar segment spans residues 397 to 447; sequence LRSNLKGLLDENKIKKLIVQLSANSSYIGSLHGEVKNTVIKSFDEATKRAH. Residue asparagine 420 is glycosylated (N-linked (GlcNAc...) asparagine). The helical transmembrane segment at 448 to 468 threads the bilayer; that stretch reads LMSTLLSSLALILCILKDNLA. Over 469-474 the chain is Cytoplasmic; it reads KPKTRR.

This sequence belongs to the major facilitator superfamily.

Its subcellular location is the vacuole membrane. Functionally, transporter required for vacuolar uptake of histidine, arginine and lysine and to a lesser extent tyrosine. This Saccharomyces cerevisiae (strain ATCC 204508 / S288c) (Baker's yeast) protein is Vacuolar basic amino acid transporter 2 (VBA2).